A 258-amino-acid chain; its full sequence is Tryptophan synthase alpha chain (258 aa).

Active-site proton acceptor residues include glutamate 52 and aspartate 63.

Belongs to the TrpA family. Tetramer of two alpha and two beta chains.

It carries out the reaction (1S,2R)-1-C-(indol-3-yl)glycerol 3-phosphate + L-serine = D-glyceraldehyde 3-phosphate + L-tryptophan + H2O. Its pathway is amino-acid biosynthesis; L-tryptophan biosynthesis; L-tryptophan from chorismate: step 5/5. Its function is as follows. The alpha subunit is responsible for the aldol cleavage of indoleglycerol phosphate to indole and glyceraldehyde 3-phosphate. This is Tryptophan synthase alpha chain from Streptococcus pneumoniae serotype 2 (strain D39 / NCTC 7466).